We begin with the raw amino-acid sequence, 231 residues long: Flagellar L-ring protein (231 aa).

The signal sequence occupies residues 1–18 (MNRLLSLFALGGAVLLAG). A lipid anchor (N-palmitoyl cysteine) is attached at cysteine 19. Residue cysteine 19 is the site of S-diacylglycerol cysteine attachment.

This sequence belongs to the FlgH family. In terms of assembly, the basal body constitutes a major portion of the flagellar organelle and consists of four rings (L,P,S, and M) mounted on a central rod.

The protein localises to the cell outer membrane. Its subcellular location is the bacterial flagellum basal body. In terms of biological role, assembles around the rod to form the L-ring and probably protects the motor/basal body from shearing forces during rotation. This chain is Flagellar L-ring protein, found in Pseudomonas putida (strain W619).